A 354-amino-acid polypeptide reads, in one-letter code: uncharacterized protein (354 aa).

This sequence belongs to the band 7/mec-2 family.

It is found in the mitochondrion. This is an uncharacterized protein from Schizosaccharomyces pombe (strain 972 / ATCC 24843) (Fission yeast).